A 178-amino-acid polypeptide reads, in one-letter code: ATP synthase subunit delta (178 aa).

This sequence belongs to the ATPase delta chain family. In terms of assembly, F-type ATPases have 2 components, F(1) - the catalytic core - and F(0) - the membrane proton channel. F(1) has five subunits: alpha(3), beta(3), gamma(1), delta(1), epsilon(1). F(0) has three main subunits: a(1), b(2) and c(10-14). The alpha and beta chains form an alternating ring which encloses part of the gamma chain. F(1) is attached to F(0) by a central stalk formed by the gamma and epsilon chains, while a peripheral stalk is formed by the delta and b chains.

It localises to the cell inner membrane. Its function is as follows. F(1)F(0) ATP synthase produces ATP from ADP in the presence of a proton or sodium gradient. F-type ATPases consist of two structural domains, F(1) containing the extramembraneous catalytic core and F(0) containing the membrane proton channel, linked together by a central stalk and a peripheral stalk. During catalysis, ATP synthesis in the catalytic domain of F(1) is coupled via a rotary mechanism of the central stalk subunits to proton translocation. Functionally, this protein is part of the stalk that links CF(0) to CF(1). It either transmits conformational changes from CF(0) to CF(1) or is implicated in proton conduction. The polypeptide is ATP synthase subunit delta (Nitrosococcus oceani (strain ATCC 19707 / BCRC 17464 / JCM 30415 / NCIMB 11848 / C-107)).